We begin with the raw amino-acid sequence, 156 residues long: Ribosomal RNA large subunit methyltransferase H (156 aa).

S-adenosyl-L-methionine is bound by residues L74, G105, and 124-129 (LSKLTL).

Belongs to the RNA methyltransferase RlmH family. As to quaternary structure, homodimer.

It is found in the cytoplasm. It carries out the reaction pseudouridine(1915) in 23S rRNA + S-adenosyl-L-methionine = N(3)-methylpseudouridine(1915) in 23S rRNA + S-adenosyl-L-homocysteine + H(+). Specifically methylates the pseudouridine at position 1915 (m3Psi1915) in 23S rRNA. The chain is Ribosomal RNA large subunit methyltransferase H from Legionella pneumophila (strain Paris).